Consider the following 279-residue polypeptide: tRNA (carboxymethyluridine(34)-5-O)-methyltransferase (279 aa).

The disordered stretch occupies residues 172–236 (KSKSKPKTKS…QQQDQEQERE (65 aa)). Over residues 200-229 (PKERSEYLQRWKEEQQRSKSLDDNDEKQQQ) the composition is skewed to basic and acidic residues.

Interacts with TRM112.

The protein resides in the cytoplasm. It is found in the nucleus. The catalysed reaction is 5-(carboxymethyl)uridine(34) in tRNA + S-adenosyl-L-methionine = 5-(2-methoxy-2-oxoethyl)uridine(34) in tRNA + S-adenosyl-L-homocysteine. Functionally, required for the methylation of the wobble bases at position 34 in tRNA. Appears to have a role in stress-response. The sequence is that of tRNA (carboxymethyluridine(34)-5-O)-methyltransferase (TRM9) from Saccharomyces cerevisiae (strain ATCC 204508 / S288c) (Baker's yeast).